Reading from the N-terminus, the 350-residue chain is uncharacterized protein (350 aa).

The Integrase catalytic domain maps to 164 to 327 (NDPLPGYVEV…EKTRIGARVV (164 aa)).

This is an uncharacterized protein from Sinorhizobium fredii (strain NBRC 101917 / NGR234).